The sequence spans 505 residues: Probable alpha-L-arabinofuranosidase C (505 aa).

4 N-linked (GlcNAc...) asparagine glycosylation sites follow: N81, N152, N269, and N438.

Belongs to the glycosyl hydrolase 51 family.

It localises to the secreted. It catalyses the reaction Hydrolysis of terminal non-reducing alpha-L-arabinofuranoside residues in alpha-L-arabinosides.. It functions in the pathway glycan metabolism; L-arabinan degradation. Alpha-L-arabinofuranosidase involved in the degradation of arabinoxylan, a major component of plant hemicellulose. Acts only on small linear 1,5-alpha-linked L-arabinofuranosyl oligosaccharides. This chain is Probable alpha-L-arabinofuranosidase C (abfC), found in Aspergillus fumigatus (strain ATCC MYA-4609 / CBS 101355 / FGSC A1100 / Af293) (Neosartorya fumigata).